Reading from the N-terminus, the 178-residue chain is Acireductone dioxygenase (178 aa).

4 residues coordinate Fe(2+): His81, His83, Glu87, and His126. Residues His81, His83, Glu87, and His126 each coordinate Ni(2+).

Belongs to the acireductone dioxygenase (ARD) family. It depends on Fe(2+) as a cofactor. Ni(2+) serves as cofactor.

The protein resides in the cytoplasm. It localises to the nucleus. The catalysed reaction is 1,2-dihydroxy-5-(methylsulfanyl)pent-1-en-3-one + O2 = 4-methylsulfanyl-2-oxobutanoate + formate + 2 H(+). The enzyme catalyses 1,2-dihydroxy-5-(methylsulfanyl)pent-1-en-3-one + O2 = 3-(methylsulfanyl)propanoate + CO + formate + 2 H(+). The protein operates within amino-acid biosynthesis; L-methionine biosynthesis via salvage pathway; L-methionine from S-methyl-5-thio-alpha-D-ribose 1-phosphate: step 5/6. Catalyzes 2 different reactions between oxygen and the acireductone 1,2-dihydroxy-3-keto-5-methylthiopentene (DHK-MTPene) depending upon the metal bound in the active site. Fe-containing acireductone dioxygenase (Fe-ARD) produces formate and 2-keto-4-methylthiobutyrate (KMTB), the alpha-ketoacid precursor of methionine in the methionine recycle pathway. Ni-containing acireductone dioxygenase (Ni-ARD) produces methylthiopropionate, carbon monoxide and formate, and does not lie on the methionine recycle pathway. The protein is Acireductone dioxygenase (adi1) of Neurospora crassa (strain ATCC 24698 / 74-OR23-1A / CBS 708.71 / DSM 1257 / FGSC 987).